Reading from the N-terminus, the 158-residue chain is Small ribosomal subunit protein uS9 (158 aa).

It belongs to the universal ribosomal protein uS9 family.

This Nitrobacter hamburgensis (strain DSM 10229 / NCIMB 13809 / X14) protein is Small ribosomal subunit protein uS9.